The following is a 538-amino-acid chain: Guanine nucleotide-binding protein-like 3 (538 aa).

Basic residues predominate over residues 1–45; that stretch reads MKRPKLKKASKRMTCHKRYKIQKKVREHHRKLRKEAKKRGHKKPR. Disordered stretches follow at residues 1–57 and 69–126; these read MKRP…APFK and QQLE…NPKK. The basic stretch occupies residues 2 to 46; that stretch reads KRPKLKKASKRMTCHKRYKIQKKVREHHRKLRKEAKKRGHKKPRK. The stretch at 54–95 forms a coiled coil; it reads APFKEALLREAELRKQQLEELKQQQKLDRQKEQERKRKLEVS. Over residues 69-93 the composition is skewed to basic and acidic residues; it reads QQLEELKQQQKLDRQKEQERKRKLE. Position 79 is an N6-acetyllysine (lysine 79). Lysine 91 is covalently cross-linked (Glycyl lysine isopeptide (Lys-Gly) (interchain with G-Cter in SUMO2)). A phosphoserine mark is found at serine 95 and serine 101. Positions 114-126 are enriched in basic residues; sequence RKKAKAGKQNPKK. The CP-type G domain occupies 129–307; the sequence is CQELKKVIEA…IIDSPCLIIS (179 aa). 176–179 is a binding site for GTP; that stretch reads NKSD. Residues lysine 177, lysine 248, lysine 262, and lysine 270 each participate in a glycyl lysine isopeptide (Lys-Gly) (interchain with G-Cter in SUMO2) cross-link. GTP is bound at residue 256-263; the sequence is GFPNVGKS. The intermediate stretch occupies residues 277–451; that stretch reads VGISMGLTRS…HLTNRILFRS (175 aa). Residue 300–303 participates in GTP binding; it reads DSPC. Residues 460–475 show a composition bias toward basic and acidic residues; it reads DEKDIVEESPRQTEDK. Residues 460-532 are acidic; that stretch reads DEKDIVEESP…RASQEDETYD (73 aa). The disordered stretch occupies residues 460–538; sequence DEKDIVEESP…ETYDFTTDYI (79 aa). Residues serine 493, serine 505, and serine 518 each carry the phosphoserine modification. Polar residues predominate over residues 506-518; the sequence is PEQSTAGKPSDGS.

The protein belongs to the TRAFAC class YlqF/YawG GTPase family. In terms of assembly, interacts with MDM2; this interaction stabilizes MDM2. Interaction with MDM2 occurs in the nucleoplasm and is triggered by a nucleolar release mechanism, such as mitosis-induced nucleolar disassembly. Indirectly interacts with TP53, via MDM2-binding. Interacts with TSC22D1 isoform 2. As to expression, expressed in the adult bone marrow population that is enriched in hematopoietic stem cells.

The protein resides in the nucleus. It localises to the nucleolus. Functionally, may be required to maintain the proliferative capacity of stem cells. Stabilizes MDM2 by preventing its ubiquitination, and hence proteasomal degradation. The polypeptide is Guanine nucleotide-binding protein-like 3 (Gnl3) (Mus musculus (Mouse)).